The chain runs to 504 residues: Bacterial leucyl aminopeptidase (504 aa).

An N-terminal signal peptide occupies residues 1 to 21; the sequence is MKYTKTLLAMVLSATFCQAYA. The propeptide occupies 22–106; it reads EDKVWISIGA…AMPTTLASFV (85 aa). 4 residues coordinate Zn(2+): His203, Asp223, Glu258, and Asp285. Residues Cys329 and Cys333 are joined by a disulfide bond. Position 362 (His362) interacts with Zn(2+). The propeptide at 406-504 is removed in mature form; it reads LEDGVPVTDL…SGASLKASTF (99 aa).

The protein belongs to the peptidase M28 family. M28E subfamily. The cofactor is Zn(2+).

Its subcellular location is the secreted. It catalyses the reaction Release of an N-terminal amino acid, preferentially leucine, but not glutamic or aspartic acids.. The polypeptide is Bacterial leucyl aminopeptidase (Vibrio proteolyticus (Aeromonas proteolytica)).